A 134-amino-acid chain; its full sequence is Profilin-1 (134 aa).

A disulfide bond links cysteine 13 and cysteine 118. The Involved in PIP2 interaction signature appears at 84–100; sequence AVIRGKKGSGGITIKKT. Threonine 114 bears the Phosphothreonine mark.

It belongs to the profilin family. In terms of assembly, occurs in many kinds of cells as a complex with monomeric actin in a 1:1 ratio. In terms of processing, phosphorylated by MAP kinases.

It localises to the cytoplasm. The protein resides in the cytoskeleton. In terms of biological role, binds to actin and affects the structure of the cytoskeleton. At high concentrations, profilin prevents the polymerization of actin, whereas it enhances it at low concentrations. This chain is Profilin-1, found in Olea europaea (Common olive).